A 368-amino-acid polypeptide reads, in one-letter code: Glutamate 5-kinase (368 aa).

Lys18 contributes to the ATP binding site. 3 residues coordinate substrate: Ser58, Asp145, and Asn157. ATP contacts are provided by residues 177 to 178 (SD) and 218 to 224 (TGGMASK). One can recognise a PUA domain in the interval 280–358 (AGSLTLDEGA…SELPGELRRP (79 aa)).

Belongs to the glutamate 5-kinase family.

The protein resides in the cytoplasm. The enzyme catalyses L-glutamate + ATP = L-glutamyl 5-phosphate + ADP. It functions in the pathway amino-acid biosynthesis; L-proline biosynthesis; L-glutamate 5-semialdehyde from L-glutamate: step 1/2. Functionally, catalyzes the transfer of a phosphate group to glutamate to form L-glutamate 5-phosphate. The chain is Glutamate 5-kinase from Mycobacterium ulcerans (strain Agy99).